A 137-amino-acid polypeptide reads, in one-letter code: Basic phospholipase A2 beta-bungarotoxin A1 chain (137 aa).

An N-terminal signal peptide occupies residues 1–9; it reads AVCVSLLGA. Positions 10–17 are excised as a propeptide; sequence ANIPPHPL. Intrachain disulfides connect Cys-44/Cys-136, Cys-46/Cys-62, Cys-61/Cys-117, Cys-68/Cys-110, Cys-78/Cys-103, and Cys-96/Cys-108. Residues Tyr-45, Gly-47, and Gly-49 each coordinate Ca(2+). His-65 is an active-site residue. Asp-66 provides a ligand contact to Ca(2+). Asp-111 is a catalytic residue.

Belongs to the phospholipase A2 family. Group I subfamily. D49 sub-subfamily. In terms of assembly, heterodimer; disulfide-linked. The A chain has phospholipase A2 activity and the B chain shows homology with the basic protease inhibitors. It depends on Ca(2+) as a cofactor. In terms of tissue distribution, expressed by the venom gland.

Its subcellular location is the secreted. It carries out the reaction a 1,2-diacyl-sn-glycero-3-phosphocholine + H2O = a 1-acyl-sn-glycero-3-phosphocholine + a fatty acid + H(+). Its function is as follows. Snake venom phospholipase A2 (PLA2) that shows presynaptic neurotoxicity. The A chain has phospholipase activity. PLA2 catalyzes the calcium-dependent hydrolysis of the 2-acyl groups in 3-sn-phosphoglycerides. This Bungarus candidus (Malayan krait) protein is Basic phospholipase A2 beta-bungarotoxin A1 chain.